The primary structure comprises 560 residues: Secreted RxLR effector protein 142 (560 aa).

The N-terminal stretch at 1-22 is a signal peptide; it reads MRRAYFVAIALLVAAGGKTAAG. 2 disordered regions span residues 48–73 and 354–377; these read QSQNLQESRDPKDDLKLSAGNEERTP and INRPAPSGPSTNGATTSNGGLNNQ. A compositionally biased stretch (basic and acidic residues) spans 54-72; sequence ESRDPKDDLKLSAGNEERT. The short motif at 56–71 is the RxLR-dEER element; sequence RDPKDDLKLSAGNEER. Positions 361 to 377 are enriched in polar residues; that stretch reads GPSTNGATTSNGGLNNQ.

It belongs to the RxLR effector family.

It localises to the secreted. It is found in the host nucleus. Secreted effector that completely suppresses the host cell death induced by cell death-inducing proteins. The sequence is that of Secreted RxLR effector protein 142 from Plasmopara viticola (Downy mildew of grapevine).